The primary structure comprises 814 residues: DNA ligase (814 aa).

NAD(+) is bound by residues 46–50 (DAEYD), 95–96 (SL), and E129. K131 functions as the N6-AMP-lysine intermediate in the catalytic mechanism. NAD(+) contacts are provided by R152, E189, K305, and K329. Zn(2+) contacts are provided by C434, C437, C458, and C464. The disordered stretch occupies residues 525-548 (LSAQRRSEGEPAPKKPTKKKGEEE). In terms of domain architecture, BRCT spans 735–814 (TSAAAFAGKT…DDWLAMLAEA (80 aa)).

The protein belongs to the NAD-dependent DNA ligase family. LigA subfamily. Mg(2+) is required as a cofactor. Requires Mn(2+) as cofactor.

The catalysed reaction is NAD(+) + (deoxyribonucleotide)n-3'-hydroxyl + 5'-phospho-(deoxyribonucleotide)m = (deoxyribonucleotide)n+m + AMP + beta-nicotinamide D-nucleotide.. Functionally, DNA ligase that catalyzes the formation of phosphodiester linkages between 5'-phosphoryl and 3'-hydroxyl groups in double-stranded DNA using NAD as a coenzyme and as the energy source for the reaction. It is essential for DNA replication and repair of damaged DNA. The protein is DNA ligase of Methylorubrum extorquens (strain PA1) (Methylobacterium extorquens).